Consider the following 87-residue polypeptide: Cell division topological specificity factor (87 aa).

Belongs to the MinE family.

Its function is as follows. Prevents the cell division inhibition by proteins MinC and MinD at internal division sites while permitting inhibition at polar sites. This ensures cell division at the proper site by restricting the formation of a division septum at the midpoint of the long axis of the cell. In Herpetosiphon aurantiacus (strain ATCC 23779 / DSM 785 / 114-95), this protein is Cell division topological specificity factor.